Reading from the N-terminus, the 496-residue chain is 1-aminocyclopropane-1-carboxylate synthase 4 (496 aa).

K300 bears the N6-(pyridoxal phosphate)lysine mark.

This sequence belongs to the class-I pyridoxal-phosphate-dependent aminotransferase family. Pyridoxal 5'-phosphate is required as a cofactor. Expressed in leaves. Expressed in shoots and leaf blades. Expressed at low levels in leaf sheaths.

It catalyses the reaction S-adenosyl-L-methionine = 1-aminocyclopropane-1-carboxylate + S-methyl-5'-thioadenosine + H(+). Its pathway is alkene biosynthesis; ethylene biosynthesis via S-adenosyl-L-methionine; ethylene from S-adenosyl-L-methionine: step 1/2. In terms of biological role, catalyzes the formation of 1-aminocyclopropane-1-carboxylate, a direct precursor of ethylene in higher plants. This Oryza sativa subsp. japonica (Rice) protein is 1-aminocyclopropane-1-carboxylate synthase 4.